The chain runs to 110 residues: Integration host factor subunit alpha (110 aa).

The protein belongs to the bacterial histone-like protein family. As to quaternary structure, heterodimer of an alpha and a beta chain.

In terms of biological role, this protein is one of the two subunits of integration host factor, a specific DNA-binding protein that functions in genetic recombination as well as in transcriptional and translational control. This chain is Integration host factor subunit alpha, found in Nitrobacter hamburgensis (strain DSM 10229 / NCIMB 13809 / X14).